A 426-amino-acid chain; its full sequence is 3-phosphoshikimate 1-carboxyvinyltransferase (426 aa).

The 3-phosphoshikimate site is built by lysine 22, serine 23, and arginine 27. Lysine 22 is a phosphoenolpyruvate binding site. 2 residues coordinate phosphoenolpyruvate: glycine 96 and arginine 124. Residues serine 170, serine 171, glutamine 172, serine 198, aspartate 314, asparagine 337, and lysine 341 each contribute to the 3-phosphoshikimate site. Phosphoenolpyruvate is bound at residue glutamine 172. The Proton acceptor role is filled by aspartate 314. Phosphoenolpyruvate contacts are provided by arginine 345, arginine 387, and lysine 412.

The protein belongs to the EPSP synthase family. As to quaternary structure, monomer.

The protein resides in the cytoplasm. It catalyses the reaction 3-phosphoshikimate + phosphoenolpyruvate = 5-O-(1-carboxyvinyl)-3-phosphoshikimate + phosphate. The protein operates within metabolic intermediate biosynthesis; chorismate biosynthesis; chorismate from D-erythrose 4-phosphate and phosphoenolpyruvate: step 6/7. Its function is as follows. Catalyzes the transfer of the enolpyruvyl moiety of phosphoenolpyruvate (PEP) to the 5-hydroxyl of shikimate-3-phosphate (S3P) to produce enolpyruvyl shikimate-3-phosphate and inorganic phosphate. This is 3-phosphoshikimate 1-carboxyvinyltransferase from Shewanella baltica (strain OS155 / ATCC BAA-1091).